Consider the following 59-residue polypeptide: Large ribosomal subunit protein bL33 (59 aa).

The tract at residues 26–59 (RYTTTKNKKNNTERLVLKKYNPNLKKHTEHKEIK) is disordered.

Belongs to the bacterial ribosomal protein bL33 family.

This chain is Large ribosomal subunit protein bL33, found in Chlorobium phaeobacteroides (strain BS1).